Consider the following 248-residue polypeptide: MWLGVVTLFPEMFRAVTDFGVTGRAVSKGLLELQTWNPRDFTHDKHKTVDDRPYGGGPGMLMMVQPLRDAIHAAKAAAGKEAKVIYLSPQGRKLTQQGVEELAKSSSLVLVCGRYEGVDERIIQTEVDEEWSIGDYVLSGGELPAMTLIDSVSRLVPGVLGKQASAEQDSFSDGLLDCPHYTRPESLDGLDVPAVLLSGNHEHIRRWRLQQSLGRTLLRRPELLENLALTGEQEKLLADFVDTIKQDD.

Residues G113 and 133 to 138 each bind S-adenosyl-L-methionine; that span reads IGDYVL.

The protein belongs to the RNA methyltransferase TrmD family. In terms of assembly, homodimer.

It localises to the cytoplasm. The catalysed reaction is guanosine(37) in tRNA + S-adenosyl-L-methionine = N(1)-methylguanosine(37) in tRNA + S-adenosyl-L-homocysteine + H(+). In terms of biological role, specifically methylates guanosine-37 in various tRNAs. This chain is tRNA (guanine-N(1)-)-methyltransferase, found in Shewanella halifaxensis (strain HAW-EB4).